The sequence spans 49 residues: Large ribosomal subunit protein bL32 (49 aa).

This sequence belongs to the bacterial ribosomal protein bL32 family.

This Nautilia profundicola (strain ATCC BAA-1463 / DSM 18972 / AmH) protein is Large ribosomal subunit protein bL32.